Reading from the N-terminus, the 799-residue chain is Protein translocase subunit SecA (799 aa).

ATP-binding positions include Gln85, 103 to 107 (GEGKT), and Asp504.

The protein belongs to the SecA family. Monomer and homodimer. Part of the essential Sec protein translocation apparatus which comprises SecA, SecYEG and auxiliary proteins SecDF. Other proteins may also be involved.

The protein resides in the cell membrane. It is found in the cytoplasm. The catalysed reaction is ATP + H2O + cellular proteinSide 1 = ADP + phosphate + cellular proteinSide 2.. Part of the Sec protein translocase complex. Interacts with the SecYEG preprotein conducting channel. Has a central role in coupling the hydrolysis of ATP to the transfer of proteins into and across the cell membrane, serving as an ATP-driven molecular motor driving the stepwise translocation of polypeptide chains across the membrane. The polypeptide is Protein translocase subunit SecA (Lactobacillus acidophilus (strain ATCC 700396 / NCK56 / N2 / NCFM)).